Reading from the N-terminus, the 357-residue chain is Guanine nucleotide-binding protein alpha-1 subunit (357 aa).

A lipid anchor (N-myristoyl glycine) is attached at Gly2. The S-palmitoyl cysteine moiety is linked to residue Cys4. In terms of domain architecture, G-alpha spans 32-357 (NVIKLLLLGA…SSKLKGCGLF (326 aa)). The segment at 35–48 (KLLLLGAGESGKST) is G1 motif. GTP contacts are provided by Glu43, Ser44, Gly45, Lys46, Ser47, Thr48, Asp151, Leu176, Thr182, Gly204, Asn270, Lys271, Asp273, and Ala329. Ser47 is a binding site for Mg(2+). The segment at 174–182 (DILHTRVPT) is G2 motif. Mg(2+) is bound at residue Thr182. The interval 197 to 206 (FRVFDVGGQR) is G3 motif. Residues 266-273 (ILFLNKVD) are G4 motif. Positions 327 to 332 (TCATDT) are G5 motif.

The protein belongs to the G-alpha family. G(q) subfamily. In terms of assembly, g proteins are composed of 3 units; alpha, beta and gamma. The alpha chain contains the guanine nucleotide binding site. It depends on Mg(2+) as a cofactor.

In terms of biological role, guanine nucleotide-binding proteins (G proteins) are involved as modulators or transducers in various transmembrane signaling systems. This chain is Guanine nucleotide-binding protein alpha-1 subunit (gpa-1), found in Caenorhabditis briggsae.